Reading from the N-terminus, the 278-residue chain is MPELPEVENVRRGLETLAVGKTVSAIDIRWSKIIVNPDEVFTAGLVGQQITAVDRRGKYLLIRFGEQLTVVSHLRMEGKYEVVAKEAPISKHTHVIFEFTDGQQMRYLDTRKFGRMQLIETGQENTVAGLKDLGPEPTPTTFLKADFYQRLQKHHKAIKPLLLDQKVVTGLGNIYVDETLWLSHIHPETPANDLTRAETDRLHDEIIAELELAINHGGTTVNTFLNATGHAGAFQEMLHVYGKKGVPCERCGTPIEKIKVAQRGTHFCPKCQIKRNAK.

Pro2 acts as the Schiff-base intermediate with DNA in catalysis. The active-site Proton donor is Glu3. Lys58 acts as the Proton donor; for beta-elimination activity in catalysis. Residues His92 and Arg111 each contribute to the DNA site. An FPG-type zinc finger spans residues 239–273; that stretch reads HVYGKKGVPCERCGTPIEKIKVAQRGTHFCPKCQI. Arg263 (proton donor; for delta-elimination activity) is an active-site residue.

Belongs to the FPG family. In terms of assembly, monomer. Zn(2+) serves as cofactor.

It carries out the reaction Hydrolysis of DNA containing ring-opened 7-methylguanine residues, releasing 2,6-diamino-4-hydroxy-5-(N-methyl)formamidopyrimidine.. The enzyme catalyses 2'-deoxyribonucleotide-(2'-deoxyribose 5'-phosphate)-2'-deoxyribonucleotide-DNA = a 3'-end 2'-deoxyribonucleotide-(2,3-dehydro-2,3-deoxyribose 5'-phosphate)-DNA + a 5'-end 5'-phospho-2'-deoxyribonucleoside-DNA + H(+). Functionally, involved in base excision repair of DNA damaged by oxidation or by mutagenic agents. Acts as a DNA glycosylase that recognizes and removes damaged bases. Has a preference for oxidized purines, such as 7,8-dihydro-8-oxoguanine (8-oxoG). Has AP (apurinic/apyrimidinic) lyase activity and introduces nicks in the DNA strand. Cleaves the DNA backbone by beta-delta elimination to generate a single-strand break at the site of the removed base with both 3'- and 5'-phosphates. The sequence is that of Formamidopyrimidine-DNA glycosylase from Latilactobacillus sakei subsp. sakei (strain 23K) (Lactobacillus sakei subsp. sakei).